The sequence spans 1145 residues: Cation channel sperm-associated auxiliary subunit gamma 2 (1145 aa).

The N-terminal stretch at 1–38 (MVSRPAMSPVSPVWPRKPNLWAFWVLRLVLLLSLKSWA) is a signal peptide. Residues 39-1061 (EDALQHCTWL…IHGLPLSSKR (1023 aa)) are Extracellular-facing. 2 cysteine pairs are disulfide-bonded: Cys45–Cys106 and Cys160–Cys166. Asn103 is a glycosylation site (N-linked (GlcNAc...) asparagine). A glycan (N-linked (GlcNAc...) asparagine) is linked at Asn178. Cys289 and Cys344 form a disulfide bridge. Residues Asn356, Asn402, Asn672, and Asn743 are each glycosylated (N-linked (GlcNAc...) asparagine). 6 disulfides stabilise this stretch: Cys395–Cys403, Cys634–Cys856, Cys802–Cys830, Cys878–Cys1042, Cys905–Cys914, and Cys1006–Cys1012. Asn1038 carries N-linked (GlcNAc...) asparagine glycosylation. A helical transmembrane segment spans residues 1062 to 1083 (TSFIVMVSTSFFIALVVFYILF). Residues 1084–1145 (CLVWPHIVKA…KEDNVQAKTA (62 aa)) are Cytoplasmic-facing.

The protein belongs to the CATSPERG family. As to quaternary structure, component of the CatSper complex or CatSpermasome composed of the core pore-forming members CATSPER1, CATSPER2, CATSPER3 and CATSPER4 as well as auxiliary members CATSPERB, CATSPERG2, CATSPERD, CATSPERE, CATSPERZ, C2CD6/CATSPERT, SLCO6C1, TMEM249, TMEM262 and EFCAB9. HSPA1 may be an additional auxiliary complex member. The core complex members CATSPER1, CATSPER2, CATSPER3 and CATSPER4 form a heterotetrameric channel. The auxiliary CATSPERB, CATSPERG2, CATSPERD and CATSPERE subunits form a pavilion-like structure over the pore which stabilizes the complex through interactions with CATSPER4, CATSPER3, CATSPER1 and CATSPER2 respectively. SLCO6C1 interacts with CATSPERE and TMEM262/CATSPERH interacts with CATSPERB, further stabilizing the complex. C2CD6/CATSPERT interacts at least with CATSPERD and is required for targeting the CatSper complex in the flagellar membrane. As to expression, testis-specific. Specifically expressed in the principal piece of the sperm tail (at protein level). Expressed in spermatocytes and spermatids within the seminiferous tubule but not in interstitial cells.

The protein resides in the cell projection. It localises to the cilium. The protein localises to the flagellum membrane. In terms of biological role, auxiliary component of the CatSper complex, a complex involved in sperm cell hyperactivation. Sperm cell hyperactivation is needed for sperm motility which is essential late in the preparation of sperm for fertilization. This Mus musculus (Mouse) protein is Cation channel sperm-associated auxiliary subunit gamma 2.